The following is a 96-amino-acid chain: Large ribosomal subunit protein bL28 (96 aa).

Residues 1–21 (MSRVCELTGKGPMTGNNVSHA) form a disordered region.

It belongs to the bacterial ribosomal protein bL28 family.

The polypeptide is Large ribosomal subunit protein bL28 (Jannaschia sp. (strain CCS1)).